Reading from the N-terminus, the 113-residue chain is DNA-binding protein PTO0204 (113 aa).

This sequence belongs to the PDCD5 family.

The polypeptide is DNA-binding protein PTO0204 (Picrophilus torridus (strain ATCC 700027 / DSM 9790 / JCM 10055 / NBRC 100828 / KAW 2/3)).